A 128-amino-acid polypeptide reads, in one-letter code: Sulfurtransferase TusD (128 aa).

C78 (cysteine persulfide intermediate) is an active-site residue.

The protein belongs to the DsrE/TusD family. Heterohexamer, formed by a dimer of trimers. The hexameric TusBCD complex contains 2 copies each of TusB, TusC and TusD. The TusBCD complex interacts with TusE.

It localises to the cytoplasm. Functionally, part of a sulfur-relay system required for 2-thiolation of 5-methylaminomethyl-2-thiouridine (mnm(5)s(2)U) at tRNA wobble positions. Accepts sulfur from TusA and transfers it in turn to TusE. The chain is Sulfurtransferase TusD from Escherichia coli (strain K12 / MC4100 / BW2952).